The sequence spans 915 residues: p53-induced death domain-containing protein 1 (915 aa).

A2 carries the post-translational modification N-acetylalanine. 7 LRR repeats span residues 131–152 (CLAH…VPEL), 154–176 (GLDA…GALP), 177–199 (ALTF…GSLS), 200–221 (TLQR…IGNL), 223–245 (SLSE…AGLR), 246–268 (SLRL…VHLP), and 269–290 (LITR…LLDA). S304 carries the phosphoserine modification. ZU5 domains are found at residues 327–459 (DLDS…VLRP) and 460–601 (VSNT…WYTT). Peptidase S68 stretches follow at residues 428 to 457 (DLET…LVVL) and 571 to 599 (DITT…WLWY). Residues H449, S451, H591, and S593 contribute to the active site. The tract at residues 585–721 (ARFQVTHFSW…TTALDREAQD (137 aa)) is UPA domain. In terms of domain architecture, Death spans 793 to 878 (TQSNLLSVAS…DVAEEVRAIL (86 aa)). The interval 888-915 (SIRRTGLAPEDSTLPGTSASQTPESAQA) is disordered. The span at 901-915 (LPGTSASQTPESAQA) shows a compositional bias: polar residues.

As to quaternary structure, forms a complex named the PIDDosome with CASP2 and CRADD. Forms a complex with IKBKG and RIPK1. Interacts with FADD and MADD. In terms of processing, undergoes autoproteolytic processing whose extent either directs cells towards survival or apoptotic pathways. Autoproteolytically cleaved into two main fragments PIDD-N and PIDD-C. PIDD-C can be further processed into PIDD-CC, a processing which is enhanced by DNA damage. The cleavage producing PIDD-C is required for translocation of PIDD1 to the nucleus upon DNA damage and activation of NF-kappa-B. PIDD-CC mediates the interaction with CRADD and the cleavage producing PIDD-CC is required for the activation of CASP2. PIDD-N remains associated with PIDD-C and PIDD-CC after cleavage. As to expression, ubiquitous.

Its subcellular location is the cytoplasm. The protein localises to the nucleus. Its function is as follows. Component of the DNA damage/stress response pathway that functions downstream of p53/TP53 and can either promote cell survival or apoptosis. Associated with CRADD and the CASP2 caspase, it forms the PIDDosome a complex that activates CASP2 and triggers apoptosis. Associated with IKBKG and RIPK1, it enhances sumoylation and ubiquitination of IKBKG which is important for activation of the transcription factor NF-kappa-B. In Mus musculus (Mouse), this protein is p53-induced death domain-containing protein 1.